Reading from the N-terminus, the 290-residue chain is MTQQLPILSLKKIYSGKVRDLYEIDDKRMLMVASDRLSAFDVILDDPIPRKGEILTQISNFWFNKLAHIMPNHFTGDSVYDVLPKEEADLIRDRAVVCKRLNPIKIESIVRGYLTGSGLKDYKQTGTICGLKLPEGLVEASKLPEAIFTPSSKEEVGNHDINISYAECEKLIGADLAAQVKEKAIALYTVAAEYALTKGIIICDTKFEFGLDENGTLTLMDEVLTPDSSRFWSVDTYQAGTNPPSFDKQFVRDWLENSGWNKQAPVPKVPENIIQKTVDKYQEALDLLTK.

It belongs to the SAICAR synthetase family.

It carries out the reaction 5-amino-1-(5-phospho-D-ribosyl)imidazole-4-carboxylate + L-aspartate + ATP = (2S)-2-[5-amino-1-(5-phospho-beta-D-ribosyl)imidazole-4-carboxamido]succinate + ADP + phosphate + 2 H(+). The protein operates within purine metabolism; IMP biosynthesis via de novo pathway; 5-amino-1-(5-phospho-D-ribosyl)imidazole-4-carboxamide from 5-amino-1-(5-phospho-D-ribosyl)imidazole-4-carboxylate: step 1/2. In Haemophilus influenzae (strain PittGG), this protein is Phosphoribosylaminoimidazole-succinocarboxamide synthase.